Here is a 961-residue protein sequence, read N- to C-terminus: Glycine dehydrogenase (decarboxylating) (961 aa).

Position 709 is an N6-(pyridoxal phosphate)lysine (K709).

The protein belongs to the GcvP family. As to quaternary structure, the glycine cleavage system is composed of four proteins: P, T, L and H. The cofactor is pyridoxal 5'-phosphate.

The catalysed reaction is N(6)-[(R)-lipoyl]-L-lysyl-[glycine-cleavage complex H protein] + glycine + H(+) = N(6)-[(R)-S(8)-aminomethyldihydrolipoyl]-L-lysyl-[glycine-cleavage complex H protein] + CO2. In terms of biological role, the glycine cleavage system catalyzes the degradation of glycine. The P protein binds the alpha-amino group of glycine through its pyridoxal phosphate cofactor; CO(2) is released and the remaining methylamine moiety is then transferred to the lipoamide cofactor of the H protein. In Teredinibacter turnerae (strain ATCC 39867 / T7901), this protein is Glycine dehydrogenase (decarboxylating).